The sequence spans 790 residues: MNERSLRVLEYNKIIHMLEDKCTSSLGREKLKELKPISNFEQITTWQKETSEAQSILIHRGNIPLGGIHDVSQYLRRTEIGSYLDPGQLLQLKETLAAARRMKTFLKDDKKESTYPIIQELGNNISSLKHIEDKIELCIISETELSDNASPELRNIRRQISSKNDAIRNKLNSIITSASNQKYLQDPIITMRQDRYVVPVKQEHRGNIPGLIHDQSSSGATIFVEPMAVVELNNQLKELRLKEQVEIERILMEIAAMIAERSDDIKSNQIILKELDFIFAKGKLSVEMRAVEPVLNTNKKISIKNGRHPLLPSNKVVPNTMWLGEDFHTLVITGPNTGGKTVTLKTLGLLTLMAQSGLHVPADYGTKLAIFDQVFADIGDEQSIEQSLSTFSSHMTNIVNIMDNVTEQSLVLFDELGAGTDPTEGAALAMAILNSLREMGTVTVATTHYSELKQYALSTEGVENASVEFDVNTLSPTYKLLIGVPGKSNAFEISRKLGLSDFLIQRSKELLTREDIQFEDLLQNIEKNRSTAEKEKDEAARLRMETQKLREEYYEKKQQLQTQKEKLISDAKREAYKIVKQAKLDADEIVENLKTLRAELEEKEMNKKIEEARKNLSDQMGKLAENMGEKLVLKTNKKPPKNLKIGESVNILSLNQIGYVILPEDANGEVQLQVGIMKVNMHVSNLERIKEEKDTKKTGVGKIVKSKAENIKMEIDVRGQNLEEAMLNVDKYLDDAYIAGLTHVTIIHGVGTGVLSAGLKQMLKKHKHTKSFREGEYGEGGMGVTIVHLK.

Position 334–341 (334–341 (GPNTGGKT)) interacts with ATP. Residues 715–790 (IDVRGQNLEE…GMGVTIVHLK (76 aa)) form the Smr domain.

It belongs to the DNA mismatch repair MutS family. MutS2 subfamily. As to quaternary structure, homodimer. Binds to stalled ribosomes, contacting rRNA.

Functionally, endonuclease that is involved in the suppression of homologous recombination and thus may have a key role in the control of bacterial genetic diversity. In terms of biological role, acts as a ribosome collision sensor, splitting the ribosome into its 2 subunits. Detects stalled/collided 70S ribosomes which it binds and splits by an ATP-hydrolysis driven conformational change. Acts upstream of the ribosome quality control system (RQC), a ribosome-associated complex that mediates the extraction of incompletely synthesized nascent chains from stalled ribosomes and their subsequent degradation. Probably generates substrates for RQC. The chain is Endonuclease MutS2 from Alkaliphilus oremlandii (strain OhILAs) (Clostridium oremlandii (strain OhILAs)).